We begin with the raw amino-acid sequence, 135 residues long: Helix-loop-helix protein 2 (135 aa).

Residues 1-81 (MMLSPDQAAD…RRATAKYRSA (81 aa)) form a disordered region. A compositionally biased stretch (basic and acidic residues) spans 10–21 (DSDHPSSTHSDP). Over residues 68–81 (KRRRRRATAKYRSA) the composition is skewed to basic residues. The 53-residue stretch at 77-129 (KYRSAHATRERIRVEAFNLAFAELRKLLPTLPPDKKLSKIEILRLAICYISYL) folds into the bHLH domain.

As to quaternary structure, homodimer. Interacts and may form heterodimers with STAT3. Expressed in developing neurons. Transiently expressed in the cerebellum during postnatal development, exclusively in the premigratory zone of the external granule layer where postmitotic neurons undergo initial stages of neuronal differentiation. Expression is not detected in mature neurons. Expressed in the anterior lobe of the adult pituitary.

The protein resides in the nucleus. Functionally, transcription factor which binds the E box motif 5'-CA[TC][AG]TG-3'. Involved in regulating energy expenditure, body mass, voluntary physical activity, mating behavior and reproductive longevity, acting through the hypothalamic-pituitary-gonadal axis. Acts as a transcriptional activator of target genes, including Ndn, Pcsk1, Mc4r. Is also a transcriptional activator of KISS1. May act centrally to regulate function of both white and brown adipose tissue. Together with NHLH1, required to maintain migration and survival of cells in the anterior extramural migration stream (aes), which forms the precerebellar nuclei. Also, in concert with Nhlh1, may determine fate of gonadotropin releasing hormone-1 (GnRH-1) neurons. This is Helix-loop-helix protein 2 (Nhlh2) from Mus musculus (Mouse).